A 418-amino-acid chain; its full sequence is Tryptophan synthase beta chain (418 aa).

Over residues 1–17 (MTSTLPNASTPDPSSLQ) the composition is skewed to polar residues. The disordered stretch occupies residues 1-23 (MTSTLPNASTPDPSSLQPAVRPG). An N6-(pyridoxal phosphate)lysine modification is found at Lys111.

Belongs to the TrpB family. As to quaternary structure, tetramer of two alpha and two beta chains. It depends on pyridoxal 5'-phosphate as a cofactor.

It catalyses the reaction (1S,2R)-1-C-(indol-3-yl)glycerol 3-phosphate + L-serine = D-glyceraldehyde 3-phosphate + L-tryptophan + H2O. Its pathway is amino-acid biosynthesis; L-tryptophan biosynthesis; L-tryptophan from chorismate: step 5/5. The beta subunit is responsible for the synthesis of L-tryptophan from indole and L-serine. This Synechococcus sp. (strain CC9605) protein is Tryptophan synthase beta chain.